The sequence spans 119 residues: Putative membrane protein insertion efficiency factor (119 aa).

It belongs to the UPF0161 family.

It is found in the cell inner membrane. Its function is as follows. Could be involved in insertion of integral membrane proteins into the membrane. The sequence is that of Putative membrane protein insertion efficiency factor from Agrobacterium fabrum (strain C58 / ATCC 33970) (Agrobacterium tumefaciens (strain C58)).